Reading from the N-terminus, the 396-residue chain is Activity-regulated cytoskeleton-associated protein (396 aa).

Positions 54-78 (SKQVERELKGLHRSVGKLENNLDGY) form a coiled coil. Residues 89 to 100 (KSIKACLCRCQE) form an interaction with SH3GL1 or SH3GL3 region. The segment at 195–214 (QSWVPGEDGQPSPGVDTQIF) is interaction with DNM2. Position 260 is a phosphoserine (S260). Residues K268 and K269 each participate in a glycyl lysine isopeptide (Lys-Gly) (interchain with G-Cter in ubiquitin) cross-link. A Phosphothreonine modification is found at T278. Positions 358 to 396 (GLEQAAEPSVTPLPTEDETEALTPALTSESVASDRTQPE) are disordered. Over residues 382-396 (ALTSESVASDRTQPE) the composition is skewed to polar residues.

The protein belongs to the ARC/ARG3.1 family. Homooligomer; homooligomerizes into virion-like capsids. Interacts with SH3GL1/endophilin-2, SH3GL3/endophilin-3 and DNM2/DYN2. Interacts with CAMK2B (in the kinase inactive state); leading to target ARC to inactive synapses. Interacts with PSEN1. Interacts with GRIN2A and GRIN2B; inhibiting homooligomerization. Post-translationally, palmitoylation anchors the protein into the membrane by allowing direct insertion into the hydrophobic core of the lipid bilayer. In terms of processing, ubiquitinated by UBE3A, leading to its degradation by the proteasome, thereby promoting AMPA receptors (AMPARs) expression at synapses. Ubiquitinated by RNF216 at Lys-268 and Lys-269 limiting ARC protein levels induced by synaptic activity and thus regulating ARC-dependent forms of synaptic plasticity. Phosphorylation at Ser-260 by CaMK2 prevents homooligomerization into virion-like capsids by disrupting an interaction surface essential for high-order oligomerization. Phosphorylation by CaMK2 inhibits synaptic activity. Expressed exclusively in certain parts of the brain including cortex and molecular layer of the hippocampus. Typically expressed at high level in a minority of neurons. Basal expression higher in cortex than in hippocampus, highest in visual cortex.

Its subcellular location is the extracellular vesicle membrane. It localises to the postsynaptic cell membrane. It is found in the synapse. The protein resides in the postsynaptic density. The protein localises to the early endosome membrane. Its subcellular location is the cell projection. It localises to the dendrite. It is found in the cytoplasm. The protein resides in the cytoskeleton. The protein localises to the cell cortex. Its subcellular location is the dendritic spine. It localises to the cytoplasmic vesicle. It is found in the secretory vesicle. The protein resides in the acrosome. The protein localises to the clathrin-coated vesicle membrane. Functionally, master regulator of synaptic plasticity that self-assembles into virion-like capsids that encapsulate RNAs and mediate intercellular RNA transfer in the nervous system. ARC protein is released from neurons in extracellular vesicles that mediate the transfer of ARC mRNA into new target cells, where ARC mRNA can undergo activity-dependent translation. ARC capsids are endocytosed and are able to transfer ARC mRNA into the cytoplasm of neurons. Acts as a key regulator of synaptic plasticity: required for protein synthesis-dependent forms of long-term potentiation (LTP) and depression (LTD) and for the formation of long-term memory. Regulates synaptic plasticity by promoting endocytosis of AMPA receptors (AMPARs) in response to synaptic activity: this endocytic pathway maintains levels of surface AMPARs in response to chronic changes in neuronal activity through synaptic scaling, thereby contributing to neuronal homeostasis. Acts as a postsynaptic mediator of activity-dependent synapse elimination in the developing cerebellum by mediating elimination of surplus climbing fiber synapses. Accumulates at weaker synapses, probably to prevent their undesired enhancement. This suggests that ARC-containing virion-like capsids may be required to eliminate synaptic material. Required to transduce experience into long-lasting changes in visual cortex plasticity and for long-term memory. Involved in postsynaptic trafficking and processing of amyloid-beta A4 (APP) via interaction with PSEN1. In addition to its role in synapses, also involved in the regulation of the immune system: specifically expressed in skin-migratory dendritic cells and regulates fast dendritic cell migration, thereby regulating T-cell activation. The chain is Activity-regulated cytoskeleton-associated protein from Rattus norvegicus (Rat).